Consider the following 146-residue polypeptide: UPF0260 protein Sden_1632 (146 aa).

Belongs to the UPF0260 family.

The sequence is that of UPF0260 protein Sden_1632 from Shewanella denitrificans (strain OS217 / ATCC BAA-1090 / DSM 15013).